Here is a 374-residue protein sequence, read N- to C-terminus: Pectinesterase (374 aa).

Positions 1–31 are cleaved as a signal peptide; the sequence is MVKLLNSTRELSINALSMLNSFGDMVAQATG. Residues N58 and N124 are each glycosylated (N-linked (GlcNAc...) asparagine). 2 residues coordinate substrate: T133 and Q163. D186 functions as the Proton donor in the catalytic mechanism. C200 and C220 are joined by a disulfide. The active-site Nucleophile is the D207. N230 carries N-linked (GlcNAc...) asparagine glycosylation. Positions 275 and 277 each coordinate substrate. N303 carries an N-linked (GlcNAc...) asparagine glycan.

Belongs to the pectinesterase family. As to expression, pollen, and at much lower levels in pistils and petals.

It is found in the secreted. Its subcellular location is the cell wall. It carries out the reaction [(1-&gt;4)-alpha-D-galacturonosyl methyl ester](n) + n H2O = [(1-&gt;4)-alpha-D-galacturonosyl](n) + n methanol + n H(+). Its pathway is glycan metabolism; pectin degradation; 2-dehydro-3-deoxy-D-gluconate from pectin: step 1/5. In terms of biological role, may play a role in pollen germination and/or tube growth. This chain is Pectinesterase (PPE1), found in Petunia integrifolia (Violet-flowered petunia).